The primary structure comprises 185 residues: ATP-dependent protease subunit HslV (185 aa).

T12 is an active-site residue. Na(+) contacts are provided by S168, C171, and T174.

Belongs to the peptidase T1B family. HslV subfamily. A double ring-shaped homohexamer of HslV is capped on each side by a ring-shaped HslU homohexamer. The assembly of the HslU/HslV complex is dependent on binding of ATP.

The protein resides in the cytoplasm. It catalyses the reaction ATP-dependent cleavage of peptide bonds with broad specificity.. Allosterically activated by HslU binding. Protease subunit of a proteasome-like degradation complex believed to be a general protein degrading machinery. The chain is ATP-dependent protease subunit HslV from Jannaschia sp. (strain CCS1).